A 264-amino-acid polypeptide reads, in one-letter code: Putative hydro-lyase cgR_2449 (264 aa).

The protein belongs to the D-glutamate cyclase family.

The sequence is that of Putative hydro-lyase cgR_2449 from Corynebacterium glutamicum (strain R).